Consider the following 606-residue polypeptide: Gastrula zinc finger protein XlCGF66.1 (606 aa).

Disordered stretches follow at residues 1-31 (MGMW…RGKK) and 240-271 (TLHS…KRQK). Residues 242–262 (HSKDSCNEGHKHLSHKSDYNK) are compositionally biased toward basic and acidic residues. C2H2-type zinc fingers lie at residues 273-295 (FSCS…QKTH), 300-322 (LLCL…RQTH), 328-350 (FSCS…QITH), 384-407 (DFCS…QQVH), 413-435 (FSCT…QRTH), 441-464 (YSCS…QQVH), 470-492 (FFCS…QRTH), 498-521 (YSCS…QQVH), 527-549 (FSCS…QRTH), 555-578 (DFCF…QQVH), and 584-606 (FSCS…HRTH).

It belongs to the krueppel C2H2-type zinc-finger protein family.

It localises to the nucleus. In terms of biological role, may be involved in transcriptional regulation. The polypeptide is Gastrula zinc finger protein XlCGF66.1 (Xenopus laevis (African clawed frog)).